A 380-amino-acid polypeptide reads, in one-letter code: S-adenosylmethionine:tRNA ribosyltransferase-isomerase (380 aa).

Over residues 1–15 (MHSKHPTDTARRCET) the composition is skewed to basic and acidic residues. The interval 1-24 (MHSKHPTDTARRCETGTDSSDTAA) is disordered.

The protein belongs to the QueA family. In terms of assembly, monomer.

The protein localises to the cytoplasm. The enzyme catalyses 7-aminomethyl-7-carbaguanosine(34) in tRNA + S-adenosyl-L-methionine = epoxyqueuosine(34) in tRNA + adenine + L-methionine + 2 H(+). Its pathway is tRNA modification; tRNA-queuosine biosynthesis. In terms of biological role, transfers and isomerizes the ribose moiety from AdoMet to the 7-aminomethyl group of 7-deazaguanine (preQ1-tRNA) to give epoxyqueuosine (oQ-tRNA). The polypeptide is S-adenosylmethionine:tRNA ribosyltransferase-isomerase (Oleidesulfovibrio alaskensis (strain ATCC BAA-1058 / DSM 17464 / G20) (Desulfovibrio alaskensis)).